Here is a 623-residue protein sequence, read N- to C-terminus: Glucokinase regulatory protein (623 aa).

2 SIS domains span residues 90-286 (VQEV…QGVV) and 320-476 (VGIS…VQKF). Beta-D-fructose 1-phosphate-binding positions include 109–110 (TS), Glu-153, and 179–181 (SVG). 109–110 (TS) lines the beta-D-fructose 6-phosphate pocket. 179–181 (SVG) provides a ligand contact to beta-D-fructose 6-phosphate. Residues 199 to 200 (AV) form an important for interaction with GCK region. Glu-348 contributes to the beta-D-fructose 1-phosphate binding site. The essential for interaction with GCK stretch occupies residues 463–465 (LLF).

It belongs to the GCKR family. As to quaternary structure, interacts (fructose 6-phosphate bound form) with GCK.

The protein resides in the cytoplasm. Its subcellular location is the nucleus. The protein localises to the mitochondrion. In terms of biological role, regulates glucokinase (GCK) by forming an inactive complex with this enzyme. Acts by promoting GCK recruitment to the nucleus, possibly to provide a reserve of GCK that can be quickly released in the cytoplasm after a meal. The affinity of GCKR for GCK is modulated by fructose metabolites: GCKR with bound fructose 6-phosphate has increased affinity for GCK, while GCKR with bound fructose 1-phosphate has strongly decreased affinity for GCK and does not inhibit GCK activity. The protein is Glucokinase regulatory protein of Mus musculus (Mouse).